The following is a 478-amino-acid chain: Cytochrome c-552 (478 aa).

The signal sequence occupies residues 1–27 (MKKQWTRRSAAAIAMVTTLLLSSHSFA). H91 is a heme c binding site. Residues C119, C122, and K123 each contribute to the heme site. Heme c is bound by residues C157, C160, H161, C206, C209, and H210. E212, Y213, K258, and Q260 together coordinate Ca(2+). Y213 serves as a coordination point for substrate. Substrate is bound at residue H261. Heme c contacts are provided by H272, C279, C282, H283, H298, C311, C314, H315, and H390.

The protein belongs to the cytochrome c-552 family. The cofactor is Ca(2+). Requires heme c as cofactor.

The protein localises to the periplasm. It carries out the reaction 6 Fe(III)-[cytochrome c] + NH4(+) + 2 H2O = 6 Fe(II)-[cytochrome c] + nitrite + 8 H(+). Its pathway is nitrogen metabolism; nitrate reduction (assimilation). In terms of biological role, catalyzes the reduction of nitrite to ammonia, consuming six electrons in the process. The chain is Cytochrome c-552 from Aliivibrio salmonicida (strain LFI1238) (Vibrio salmonicida (strain LFI1238)).